Here is a 654-residue protein sequence, read N- to C-terminus: Tumor necrosis factor alpha-induced protein 2 (654 aa).

Disordered stretches follow at residues Met1–Lys38 and Gly50–Thr78. Residues Lys28–Lys38 show a composition bias toward basic residues.

Belongs to the SEC6 family.

Its function is as follows. May play a role as a mediator of inflammation and angiogenesis. This chain is Tumor necrosis factor alpha-induced protein 2 (TNFAIP2), found in Homo sapiens (Human).